Consider the following 130-residue polypeptide: T-cell receptor alpha chain V region PHDS58 (130 aa).

An N-terminal signal peptide occupies residues 1–20 (MLLALLPVLGIHFVLRDAQA). A v segment region spans residues 21-114 (QSVTQPDARV…SAVYFCAVSG (94 aa)). Asparagine 90 carries an N-linked (GlcNAc...) asparagine glycan. A j segment region spans residues 115 to 130 (FASALTFGSGTKVIVL).

The sequence is that of T-cell receptor alpha chain V region PHDS58 from Mus musculus (Mouse).